The primary structure comprises 111 residues: Nucleoid-associated protein TTE0040 (111 aa).

This sequence belongs to the YbaB/EbfC family. Homodimer.

The protein resides in the cytoplasm. The protein localises to the nucleoid. Functionally, binds to DNA and alters its conformation. May be involved in regulation of gene expression, nucleoid organization and DNA protection. This is Nucleoid-associated protein TTE0040 from Caldanaerobacter subterraneus subsp. tengcongensis (strain DSM 15242 / JCM 11007 / NBRC 100824 / MB4) (Thermoanaerobacter tengcongensis).